Consider the following 166-residue polypeptide: Small ribosomal subunit protein uS5 (166 aa).

An S5 DRBM domain is found at 11 to 74 (LDDNVVAINR…EAAKKNLITV (64 aa)).

Belongs to the universal ribosomal protein uS5 family. As to quaternary structure, part of the 30S ribosomal subunit. Contacts proteins S4 and S8.

Its function is as follows. With S4 and S12 plays an important role in translational accuracy. Functionally, located at the back of the 30S subunit body where it stabilizes the conformation of the head with respect to the body. In Lactiplantibacillus plantarum (strain ATCC BAA-793 / NCIMB 8826 / WCFS1) (Lactobacillus plantarum), this protein is Small ribosomal subunit protein uS5.